A 137-amino-acid polypeptide reads, in one-letter code: NTF2-related export protein (137 aa).

Residues 19–135 (ESKKFMDVYY…YKVKSDRFRY (117 aa)) form the NTF2 domain.

In terms of assembly, preferentially binds Ran-GTP.

It is found in the nucleus. Functionally, stimulator of protein export for NES-containing proteins. Also plays a role in the nuclear export of U1 snRNA, tRNA, and mRNA. The chain is NTF2-related export protein (nxt-1) from Caenorhabditis elegans.